Reading from the N-terminus, the 201-residue chain is Large ribosomal subunit protein uL4 (201 aa).

The segment at 44–68 (RAQKSRAEVSGSGRKPWRQKGTGRA) is disordered.

This sequence belongs to the universal ribosomal protein uL4 family. In terms of assembly, part of the 50S ribosomal subunit.

Functionally, one of the primary rRNA binding proteins, this protein initially binds near the 5'-end of the 23S rRNA. It is important during the early stages of 50S assembly. It makes multiple contacts with different domains of the 23S rRNA in the assembled 50S subunit and ribosome. Its function is as follows. Forms part of the polypeptide exit tunnel. This is Large ribosomal subunit protein uL4 from Buchnera aphidicola subsp. Acyrthosiphon pisum (strain 5A).